The sequence spans 104 residues: NADH-quinone oxidoreductase subunit K (104 aa).

Transmembrane regions (helical) follow at residues 4–24, 31–51, and 67–87; these read VPAS…LFGA, VIVL…LVAF, and LFTM…LIAL.

It belongs to the complex I subunit 4L family. As to quaternary structure, NDH-1 is composed of 14 different subunits. Subunits NuoA, H, J, K, L, M, N constitute the membrane sector of the complex.

Its subcellular location is the cell membrane. The enzyme catalyses a quinone + NADH + 5 H(+)(in) = a quinol + NAD(+) + 4 H(+)(out). Functionally, NDH-1 shuttles electrons from NADH, via FMN and iron-sulfur (Fe-S) centers, to quinones in the respiratory chain. The immediate electron acceptor for the enzyme in this species is believed to be a menaquinone. Couples the redox reaction to proton translocation (for every two electrons transferred, four hydrogen ions are translocated across the cytoplasmic membrane), and thus conserves the redox energy in a proton gradient. The protein is NADH-quinone oxidoreductase subunit K of Bacillus cereus (strain Q1).